The primary structure comprises 71 residues: ATP synthase subunit c (71 aa).

The next 2 helical transmembrane spans lie at 4–24 and 48–68; these read AVIGAGIAVLTGLGAGIGIGI and IIGAGLAEATAIYGLIIAFMI.

Belongs to the ATPase C chain family. F-type ATPases have 2 components, F(1) - the catalytic core - and F(0) - the membrane proton channel. F(1) has five subunits: alpha(3), beta(3), gamma(1), delta(1), epsilon(1). F(0) has three main subunits: a(1), b(2) and c(10-14). The alpha and beta chains form an alternating ring which encloses part of the gamma chain. F(1) is attached to F(0) by a central stalk formed by the gamma and epsilon chains, while a peripheral stalk is formed by the delta and b chains.

Its subcellular location is the cell membrane. F(1)F(0) ATP synthase produces ATP from ADP in the presence of a proton or sodium gradient. F-type ATPases consist of two structural domains, F(1) containing the extramembraneous catalytic core and F(0) containing the membrane proton channel, linked together by a central stalk and a peripheral stalk. During catalysis, ATP synthesis in the catalytic domain of F(1) is coupled via a rotary mechanism of the central stalk subunits to proton translocation. Functionally, key component of the F(0) channel; it plays a direct role in translocation across the membrane. A homomeric c-ring of between 10-14 subunits forms the central stalk rotor element with the F(1) delta and epsilon subunits. This chain is ATP synthase subunit c, found in Clostridium botulinum (strain Alaska E43 / Type E3).